We begin with the raw amino-acid sequence, 429 residues long: Argininosuccinate lyase (429 aa).

It belongs to the lyase 1 family. Argininosuccinate lyase subfamily.

The protein resides in the cytoplasm. The catalysed reaction is 2-(N(omega)-L-arginino)succinate = fumarate + L-arginine. It participates in amino-acid biosynthesis; L-arginine biosynthesis; L-arginine from L-ornithine and carbamoyl phosphate: step 3/3. This chain is Argininosuccinate lyase, found in Pyrobaculum calidifontis (strain DSM 21063 / JCM 11548 / VA1).